Consider the following 316-residue polypeptide: Annexin D5 (316 aa).

At alanine 2 the chain carries N-acetylalanine. Annexin repeat units follow at residues 11–82, 83–154, 166–238, and 242–313; these read PSPR…LWMP, EAVE…AYLN, ASVE…TILQ, and NSCF…SLLG. Positions 24, 26, 28, and 68 each coordinate Ca(2+). Serine 95 is modified (phosphoserine). Position 112 is a phosphothreonine (threonine 112). A Ca(2+)-binding site is contributed by glycine 259. A Phosphotyrosine modification is found at tyrosine 284. 2 residues coordinate Ca(2+): aspartate 299 and threonine 300.

The protein belongs to the annexin (TC 1.A.31.1) family. In terms of tissue distribution, expressed mainly in roots and flowers. Lower in stems and leaves.

This chain is Annexin D5 (ANN5), found in Arabidopsis thaliana (Mouse-ear cress).